A 109-amino-acid polypeptide reads, in one-letter code: SRA stem-loop-interacting RNA-binding protein, mitochondrial (109 aa).

The residue at position 15 (Ser15) is a Phosphoserine. Positions Pro19–Asp103 constitute an RRM domain. Thr101 is modified (phosphothreonine). Ser102 carries the post-translational modification Phosphoserine.

The protein localises to the mitochondrion. The protein resides in the nucleus. RNA-binding protein that acts as a nuclear receptor corepressor. Probably acts by binding the SRA RNA, and repressing the SRA-mediated nuclear receptor coactivation. Binds the STR7 loop of SRA RNA. Also able to repress glucocorticoid (GR), androgen (AR), thyroid (TR) and VDR-mediated transactivation. This Pongo abelii (Sumatran orangutan) protein is SRA stem-loop-interacting RNA-binding protein, mitochondrial (SLIRP).